We begin with the raw amino-acid sequence, 276 residues long: Putative E3 ubiquitin-protein ligase SINA-like 9 (276 aa).

Residues 38–74 (CPICCEALTSPIFQCDNGHLACGSCCPKLSNKCPACT) form an RING-type zinc finger. The segment at 88 to 274 (VLESILIPCP…MQVFIIENVD (187 aa)) is SBD. The segment at 91-149 (SILIPCPNVRFGCTKSFFYGKESAHEKECIFSQCSCPSSVCDYTGSYKDLYAHYKLTHS) adopts an SIAH-type zinc-finger fold. Positions 96, 103, 115, 119, 126, 131, 143, and 148 each coordinate Zn(2+).

The protein belongs to the SINA (Seven in absentia) family.

The enzyme catalyses S-ubiquitinyl-[E2 ubiquitin-conjugating enzyme]-L-cysteine + [acceptor protein]-L-lysine = [E2 ubiquitin-conjugating enzyme]-L-cysteine + N(6)-ubiquitinyl-[acceptor protein]-L-lysine.. The protein operates within protein modification; protein ubiquitination. Functionally, E3 ubiquitin-protein ligase that mediates ubiquitination and subsequent proteasomal degradation of target proteins. E3 ubiquitin ligases accept ubiquitin from an E2 ubiquitin-conjugating enzyme in the form of a thioester and then directly transfers the ubiquitin to targeted substrates. It probably triggers the ubiquitin-mediated degradation of different substrates. In Arabidopsis thaliana (Mouse-ear cress), this protein is Putative E3 ubiquitin-protein ligase SINA-like 9.